A 456-amino-acid polypeptide reads, in one-letter code: Bestrophin homolog 18 (456 aa).

Transmembrane regions (helical) follow at residues 29–49 (WSAIWIQYSVWLGLYFLVSAI), 83–103 (GFFIAGVLRRFWYLYDIIGFI), 234–254 (IIYPTIVCLAVHMYFFVGILA), and 267–287 (MIDLVFPFMTSIQFVFYMGWL). Positions 416 to 456 (ASSSRSLERQRSPGSFRMETLTPGSPTNTPIEPIDKIDKKK) are disordered.

The protein belongs to the anion channel-forming bestrophin (TC 1.A.46) family. Calcium-sensitive chloride channel subfamily. Forms oligomers.

The protein localises to the cell membrane. Its function is as follows. Forms chloride channels. In Caenorhabditis elegans, this protein is Bestrophin homolog 18 (best-18).